Here is a 593-residue protein sequence, read N- to C-terminus: Ribonuclease Y (593 aa).

Residues 6-26 (ILLMYLIVGLLTALTVLIFVF) form a helical membrane-spanning segment. The region spanning 218-278 (DPIKVKKVTD…IKLEVAYNAL (61 aa)) is the KH domain. The HD domain occupies 354–464 (VLTHSIEAAQ…TKIADFLSAA (111 aa)).

This sequence belongs to the RNase Y family.

Its subcellular location is the cell membrane. In terms of biological role, endoribonuclease that initiates mRNA decay. This Mycoplasmoides gallisepticum (strain R(low / passage 15 / clone 2)) (Mycoplasma gallisepticum) protein is Ribonuclease Y.